The chain runs to 202 residues: Small ribosomal subunit protein uS5 (202 aa).

Gly residues predominate over residues 1–13; that stretch reads MPGQQRRGGGSGG. Residues 1–31 form a disordered region; that stretch reads MPGQQRRGGGSGGSDRRERRDRSGGGPAQEK. Residues 14-23 show a composition bias toward basic and acidic residues; it reads SDRRERRDRS. Residues 34–97 enclose the S5 DRBM domain; that stretch reads YVERVVAINR…EEAKKHFFKV (64 aa).

This sequence belongs to the universal ribosomal protein uS5 family. Part of the 30S ribosomal subunit. Contacts proteins S4 and S8.

With S4 and S12 plays an important role in translational accuracy. In terms of biological role, located at the back of the 30S subunit body where it stabilizes the conformation of the head with respect to the body. This chain is Small ribosomal subunit protein uS5, found in Frankia alni (strain DSM 45986 / CECT 9034 / ACN14a).